Consider the following 241-residue polypeptide: Aspartate/glutamate leucyltransferase (241 aa).

It belongs to the R-transferase family. Bpt subfamily.

It is found in the cytoplasm. The catalysed reaction is N-terminal L-glutamyl-[protein] + L-leucyl-tRNA(Leu) = N-terminal L-leucyl-L-glutamyl-[protein] + tRNA(Leu) + H(+). The enzyme catalyses N-terminal L-aspartyl-[protein] + L-leucyl-tRNA(Leu) = N-terminal L-leucyl-L-aspartyl-[protein] + tRNA(Leu) + H(+). Functions in the N-end rule pathway of protein degradation where it conjugates Leu from its aminoacyl-tRNA to the N-termini of proteins containing an N-terminal aspartate or glutamate. The sequence is that of Aspartate/glutamate leucyltransferase from Helicobacter hepaticus (strain ATCC 51449 / 3B1).